The sequence spans 308 residues: Protein doublecortin (308 aa).

Residues 21 to 104 (ARVILFRNGD…AEPLNTEVIP (84 aa)) enclose the Doublecortin 1 domain. The tract at residues 115 to 167 (EVSDQDDEPKPSKPFVSSVPPPPTPTPTSSSGTTTTSQPTLSASPSVSSAQSP) is disordered. The span at 141 to 167 (PTSSSGTTTTSQPTLSASPSVSSAQSP) shows a compositional bias: low complexity. A Doublecortin 2 domain is found at 194–277 (KVIMCFRNGD…GETLNPLDFS (84 aa)). The disordered stretch occupies residues 282 to 308 (EHVKQKKLQEQQQQASEQQKPQEQEIF). Over residues 291–300 (EQQQQASEQQ) the composition is skewed to low complexity.

As to quaternary structure, interacts with lis1.

The protein resides in the cytoplasm. It is found in the cytoskeleton. Has a cytoskeleton-independent function in chemotactic signaling during development. This Dictyostelium discoideum (Social amoeba) protein is Protein doublecortin (dcx).